Consider the following 540-residue polypeptide: Chaperonin GroEL (540 aa).

ATP-binding positions include 29-32 (TLGP), 86-90 (DGTTT), G413, and D493. The interval 520-540 (AEKPEPKPAPGPADPGAGMDF) is disordered.

This sequence belongs to the chaperonin (HSP60) family. Forms a cylinder of 14 subunits composed of two heptameric rings stacked back-to-back. Interacts with the co-chaperonin GroES.

The protein localises to the cytoplasm. It catalyses the reaction ATP + H2O + a folded polypeptide = ADP + phosphate + an unfolded polypeptide.. Functionally, together with its co-chaperonin GroES, plays an essential role in assisting protein folding. The GroEL-GroES system forms a nano-cage that allows encapsulation of the non-native substrate proteins and provides a physical environment optimized to promote and accelerate protein folding. This Tropheryma whipplei (strain TW08/27) (Whipple's bacillus) protein is Chaperonin GroEL.